The chain runs to 122 residues: Large ribosomal subunit protein uL18 (122 aa).

Belongs to the universal ribosomal protein uL18 family. As to quaternary structure, part of the 50S ribosomal subunit; part of the 5S rRNA/L5/L18/L25 subcomplex. Contacts the 5S and 23S rRNAs.

This is one of the proteins that bind and probably mediate the attachment of the 5S RNA into the large ribosomal subunit, where it forms part of the central protuberance. The sequence is that of Large ribosomal subunit protein uL18 from Thermosipho melanesiensis (strain DSM 12029 / CIP 104789 / BI429).